The primary structure comprises 526 residues: Bifunctional purine biosynthesis protein PurH (526 aa).

The MGS-like domain maps to 1-145 (MSKAPLALLS…KNHAHVGIVT (145 aa)).

This sequence belongs to the PurH family.

It catalyses the reaction (6R)-10-formyltetrahydrofolate + 5-amino-1-(5-phospho-beta-D-ribosyl)imidazole-4-carboxamide = 5-formamido-1-(5-phospho-D-ribosyl)imidazole-4-carboxamide + (6S)-5,6,7,8-tetrahydrofolate. It carries out the reaction IMP + H2O = 5-formamido-1-(5-phospho-D-ribosyl)imidazole-4-carboxamide. The protein operates within purine metabolism; IMP biosynthesis via de novo pathway; 5-formamido-1-(5-phospho-D-ribosyl)imidazole-4-carboxamide from 5-amino-1-(5-phospho-D-ribosyl)imidazole-4-carboxamide (10-formyl THF route): step 1/1. It functions in the pathway purine metabolism; IMP biosynthesis via de novo pathway; IMP from 5-formamido-1-(5-phospho-D-ribosyl)imidazole-4-carboxamide: step 1/1. The protein is Bifunctional purine biosynthesis protein PurH of Psychrobacter cryohalolentis (strain ATCC BAA-1226 / DSM 17306 / VKM B-2378 / K5).